The following is a 156-amino-acid chain: Transcriptional repressor NrdR (156 aa).

A zinc finger spans residues Cys3–Cys34. Residues Leu49 to Val139 enclose the ATP-cone domain.

The protein belongs to the NrdR family. The cofactor is Zn(2+).

Negatively regulates transcription of bacterial ribonucleotide reductase nrd genes and operons by binding to NrdR-boxes. The protein is Transcriptional repressor NrdR of Lysinibacillus sphaericus (strain C3-41).